A 223-amino-acid chain; its full sequence is Deoxyribose-phosphate aldolase (223 aa).

Catalysis depends on D89, which acts as the Proton donor/acceptor. K152 functions as the Schiff-base intermediate with acetaldehyde in the catalytic mechanism. Residue K181 is the Proton donor/acceptor of the active site.

It belongs to the DeoC/FbaB aldolase family. DeoC type 1 subfamily.

The protein localises to the cytoplasm. It carries out the reaction 2-deoxy-D-ribose 5-phosphate = D-glyceraldehyde 3-phosphate + acetaldehyde. It participates in carbohydrate degradation; 2-deoxy-D-ribose 1-phosphate degradation; D-glyceraldehyde 3-phosphate and acetaldehyde from 2-deoxy-alpha-D-ribose 1-phosphate: step 2/2. Its function is as follows. Catalyzes a reversible aldol reaction between acetaldehyde and D-glyceraldehyde 3-phosphate to generate 2-deoxy-D-ribose 5-phosphate. This is Deoxyribose-phosphate aldolase from Bacillus cereus (strain G9842).